Consider the following 523-residue polypeptide: Glutamate--cysteine ligase (523 aa).

Belongs to the glutamate--cysteine ligase type 1 family. Type 1 subfamily.

The catalysed reaction is L-cysteine + L-glutamate + ATP = gamma-L-glutamyl-L-cysteine + ADP + phosphate + H(+). The protein operates within sulfur metabolism; glutathione biosynthesis; glutathione from L-cysteine and L-glutamate: step 1/2. The sequence is that of Glutamate--cysteine ligase from Shewanella oneidensis (strain ATCC 700550 / JCM 31522 / CIP 106686 / LMG 19005 / NCIMB 14063 / MR-1).